The chain runs to 628 residues: Chaperone protein HtpG (628 aa).

Residues 1–333 form an a; substrate-binding region; the sequence is MTTDTKATET…SADLPLNVSR (333 aa). A b region spans residues 334 to 549; sequence EMIQESPLLA…EHGPDRQFER (216 aa). Residues 550–628 form a c region; sequence LMNAAGRLDK…RLIARGIAKG (79 aa).

The protein belongs to the heat shock protein 90 family. As to quaternary structure, homodimer.

It localises to the cytoplasm. In terms of biological role, molecular chaperone. Has ATPase activity. The protein is Chaperone protein HtpG of Mesorhizobium japonicum (strain LMG 29417 / CECT 9101 / MAFF 303099) (Mesorhizobium loti (strain MAFF 303099)).